A 460-amino-acid polypeptide reads, in one-letter code: Acetyl-CoA decarbonylase/synthase complex subunit beta (460 aa).

Cysteine 188, cysteine 191, cysteine 277, and cysteine 279 together coordinate [Ni-Fe-S] cluster. Over residues 402–416 (EETEPEEEEVEEAYP) the composition is skewed to acidic residues. Residues 402-422 (EETEPEEEEVEEAYPEETPIP) are disordered.

This sequence belongs to the CdhC family. In terms of assembly, monomer. The ACDS complex is made up of alpha, epsilon, beta, gamma and delta chains with a probable stoichiometry of (alpha(2)epsilon(2))(4)-beta(8)-(gamma(1)delta(1))(8). Requires [Ni-Fe-S] cluster as cofactor.

The catalysed reaction is Co(I)-[corrinoid Fe-S protein] + acetyl-CoA + H(+) = methyl-Co(III)-[corrinoid Fe-S protein] + CO + CoA. Part of a complex that catalyzes the reversible cleavage of acetyl-CoA, allowing autotrophic growth from CO(2). The alpha-epsilon complex generates CO from CO(2), while the beta subunit (this protein) combines the CO with CoA and a methyl group to form acetyl-CoA. The methyl group, which is incorporated into acetyl-CoA, is transferred to the beta subunit by a corrinoid iron-sulfur protein (the gamma-delta complex). In Methanothermobacter thermautotrophicus (strain ATCC 29096 / DSM 1053 / JCM 10044 / NBRC 100330 / Delta H) (Methanobacterium thermoautotrophicum), this protein is Acetyl-CoA decarbonylase/synthase complex subunit beta.